The following is a 316-amino-acid chain: ATP synthase gamma chain (316 aa).

The protein belongs to the ATPase gamma chain family. In terms of assembly, F-type ATPases have 2 components, CF(1) - the catalytic core - and CF(0) - the membrane proton channel. CF(1) has five subunits: alpha(3), beta(3), gamma(1), delta(1), epsilon(1). CF(0) has three main subunits: a, b and c.

The protein resides in the cellular thylakoid membrane. In terms of biological role, produces ATP from ADP in the presence of a proton gradient across the membrane. The gamma chain is believed to be important in regulating ATPase activity and the flow of protons through the CF(0) complex. The sequence is that of ATP synthase gamma chain from Prochlorococcus marinus (strain MIT 9301).